The following is a 517-amino-acid chain: Anthranilate--CoA ligase (517 aa).

Position 161–172 (161–172) interacts with AMP; the sequence is LQYTSGSTGAPK.

It belongs to the ATP-dependent AMP-binding enzyme family. In terms of assembly, monomer.

The enzyme catalyses anthranilate + ATP + CoA = anthraniloyl-CoA + AMP + diphosphate. In terms of biological role, catalyzes the formation of anthraniloyl-CoA, which is the priming step for entry into the Pseudomonas quinolone signal (PQS) biosynthetic pathway. Also active on a variety of aromatic substrates, including benzoate and chloro and fluoro derivatives of anthranilate. The polypeptide is Anthranilate--CoA ligase (pqsA) (Pseudomonas aeruginosa (strain ATCC 15692 / DSM 22644 / CIP 104116 / JCM 14847 / LMG 12228 / 1C / PRS 101 / PAO1)).